Reading from the N-terminus, the 720-residue chain is Transcriptional regulator EFH1 (720 aa).

Composition is skewed to polar residues over residues 1-15 (MNGIMTTSSHSNFYN) and 22-35 (PSSSDHIPGPSSQD). Disordered stretches follow at residues 1–111 (MNGI…SSST), 181–223 (SFQM…HQSQ), 245–336 (QKEF…TIAT), and 365–437 (YQRQ…PQPD). Over residues 71–105 (QQNQSESQQSRQSHHLQQQQQQQQQQQQNQHNQQN) the composition is skewed to low complexity. The span at 181–200 (SFQMGSVSTPDTQNSSIRSK) shows a compositional bias: polar residues. A compositionally biased stretch (low complexity) spans 201-223 (QQQQHSYQQQQPQQLSQSQHQSQ). Residues 254–266 (GDQTLVPQTNSKL) are compositionally biased toward polar residues. Residues 267-304 (QQQISETSYSQQQQQQQSPPTPQKQQQQQHYQHQTTQP) are compositionally biased toward low complexity. The span at 313 to 336 (YSQTGGPSSSPVAGNISIPTTIAT) shows a compositional bias: polar residues. Low complexity predominate over residues 366–399 (QRQQQQQQQHQQPQSQQMSQISQLSQQIPPQGSS). The segment covering 400-413 (KNISINSTPTKSRA) has biased composition (polar residues). The span at 414-433 (SSITTRSGRQSRSTSISSFI) shows a compositional bias: low complexity. Positions 446 to 552 (KVATTRWDDE…KNIKQYFLTK (107 aa)) constitute an HTH APSES-type domain. A DNA-binding region (H-T-H motif) is located at residues 480–501 (GTKLLNVIGMTRGKRDGILKTE). The segment covering 569 to 582 (GMTRQREEVRREGR) has biased composition (basic and acidic residues). Residues 569–662 (GMTRQREEVR…KNSESKLLET (94 aa)) form a disordered region. The span at 613–644 (VPGDDEEEEDDDDDDDDDEEEGEQDDEEEEDG) shows a compositional bias: acidic residues. Positions 645–654 (SSTSMSSSKN) are enriched in low complexity.

The protein belongs to the EFG1/PHD1/stuA family.

The protein localises to the nucleus. In terms of biological role, transcription factor that regulates filamentous growth through repression of EFG1. Regulates the level of colonizing fungi, favoring commensalism as opposed to candidiasis. This Candida albicans (strain SC5314 / ATCC MYA-2876) (Yeast) protein is Transcriptional regulator EFH1 (EFH1).